The sequence spans 915 residues: Protein O-mannosyl-transferase TMTC3 (915 aa).

Topologically, residues 1–8 (MANINLKE) are cytoplasmic. Residues 9 to 29 (ITLIVGVVTACYWNSLFCGFV) form a helical membrane-spanning segment. At 30-93 (FDDVSAILDN…LSELKPMSYH (64 aa)) the chain is on the extracellular side. The helical transmembrane segment at 94 to 114 (LLNMIFHAVVSVIFLKVCKLF) threads the bilayer. Residues 115–120 (LDNKSS) lie on the Cytoplasmic side of the membrane. A run of 2 helical transmembrane segments spans residues 121–139 (VIAS…AVTG) and 140–158 (VVGR…AFLS). Residues 159 to 166 (YTRSKGPD) are Cytoplasmic-facing. A helical membrane pass occupies residues 167–187 (NSIIWTPIALTVFLVAVATLC). Topologically, residues 188–193 (KEQGIT) are extracellular. Residues 194–214 (VVGICCVYEVFIAQGYTLPLL) traverse the membrane as a helical segment. The Cytoplasmic segment spans residues 215–231 (CTTAGQFLRGKGSIPFS). A helical membrane pass occupies residues 232–252 (MLQTLVKLIVLMFSTLLLVVI). Over 253 to 317 (RVQVIQSQLP…TIPLIESLLD (65 aa)) the chain is Extracellular. A helical membrane pass occupies residues 318-338 (IRNLATFTFFCFLGMLGVFSI). Residues 339–353 (RYSGDSSKTVLMALC) lie on the Cytoplasmic side of the membrane. The chain crosses the membrane as a helical span at residues 354 to 374 (LMALPFIPASNLFFPVGFVVA). Residues 375 to 376 (ER) lie on the Extracellular side of the membrane. Residues 377 to 397 (VLYVPSMGFCILVAHGWQKIS) traverse the membrane as a helical segment. The Cytoplasmic portion of the chain corresponds to 398-404 (TKSVFKK). The chain crosses the membrane as a helical span at residues 405–423 (LSWICLSMVILTHSLKTFH). Topologically, residues 424 to 915 (RNWDWESEYT…EEIERILNGE (492 aa)) are extracellular. 9 TPR repeats span residues 446–479 (AKLW…QPDD), 480–513 (IGAH…MPQI), 529–562 (NVYI…RPDF), 563–596 (KQAY…DRNN), 597–631 (ADLW…NPKH), 669–702 (ANGY…QADF), 703–736 (RSAL…YPDH), 738–771 (KGLI…DPSN), and 772–805 (VQGK…APHE). N-linked (GlcNAc...) asparagine glycosylation is present at Asn-494. Tyr-503 is subject to Phosphotyrosine. Asn-541 is a glycosylation site (N-linked (GlcNAc...) asparagine). Positions 848 to 892 (KEIRGESRQTQIVKTSDNKSQSKSNKQLGKNGDEETPHKTTKDIK) are disordered. Residue Asn-865 is glycosylated (N-linked (GlcNAc...) asparagine). Residues 865 to 874 (NKSQSKSNKQ) are compositionally biased toward low complexity. Basic and acidic residues predominate over residues 878–892 (NGDEETPHKTTKDIK).

This sequence belongs to the TMTC family.

The protein resides in the membrane. It is found in the endoplasmic reticulum. It catalyses the reaction a di-trans,poly-cis-dolichyl beta-D-mannosyl phosphate + L-seryl-[protein] = 3-O-(alpha-D-mannosyl)-L-seryl-[protein] + a di-trans,poly-cis-dolichyl phosphate + H(+). The enzyme catalyses a di-trans,poly-cis-dolichyl beta-D-mannosyl phosphate + L-threonyl-[protein] = 3-O-(alpha-D-mannosyl)-L-threonyl-[protein] + a di-trans,poly-cis-dolichyl phosphate + H(+). It functions in the pathway protein modification; protein glycosylation. In terms of biological role, transfers mannosyl residues to the hydroxyl group of serine or threonine residues. The 4 members of the TMTC family are O-mannosyl-transferases dedicated primarily to the cadherin superfamily, each member seems to have a distinct role in decorating the cadherin domains with O-linked mannose glycans at specific regions. Also acts as O-mannosyl-transferase on other proteins such as PDIA3. Involved in the positive regulation of proteasomal protein degradation in the endoplasmic reticulum (ER), and the control of ER stress response. The protein is Protein O-mannosyl-transferase TMTC3 of Homo sapiens (Human).